Here is a 311-residue protein sequence, read N- to C-terminus: Formimidoylglutamase (311 aa).

Residues His-127, Asp-152, His-154, Asp-156, Cys-236, and Asp-238 each coordinate Mn(2+).

It belongs to the arginase family. The cofactor is Mn(2+).

The enzyme catalyses N-formimidoyl-L-glutamate + H2O = formamide + L-glutamate. It participates in amino-acid degradation; L-histidine degradation into L-glutamate; L-glutamate from N-formimidoyl-L-glutamate (hydrolase route): step 1/1. Functionally, catalyzes the conversion of N-formimidoyl-L-glutamate to L-glutamate and formamide. The sequence is that of Formimidoylglutamase from Macrococcus caseolyticus (strain JCSC5402) (Macrococcoides caseolyticum).